The chain runs to 454 residues: Chromosomal replication initiator protein DnaA (454 aa).

A domain I, interacts with DnaA modulators region spans residues 1-77; the sequence is MASLNENQKF…GFEVFGRMID (77 aa). Residues 77–115 form a domain II region; the sequence is DYELYANDELTDIELRRLNNQSPVDEPLSVAKPTSPLVS. Residues 116–332 form a domain III, AAA+ region region; sequence GLNEKYNFEN…GALNRVEFVA (217 aa). Residues glycine 160, glycine 162, lysine 163, and threonine 164 each coordinate ATP. The segment at 333-454 is domain IV, binds dsDNA; the sequence is RANGISIVDI…KDIDSIKRKF (122 aa).

The protein belongs to the DnaA family. As to quaternary structure, oligomerizes as a right-handed, spiral filament on DNA at oriC.

The protein resides in the cytoplasm. Plays an essential role in the initiation and regulation of chromosomal replication. ATP-DnaA binds to the origin of replication (oriC) to initiate formation of the DNA replication initiation complex once per cell cycle. Binds the DnaA box (a 9 base pair repeat at the origin) and separates the double-stranded (ds)DNA. Forms a right-handed helical filament on oriC DNA; dsDNA binds to the exterior of the filament while single-stranded (ss)DNA is stabiized in the filament's interior. The ATP-DnaA-oriC complex binds and stabilizes one strand of the AT-rich DNA unwinding element (DUE), permitting loading of DNA polymerase. After initiation quickly degrades to an ADP-DnaA complex that is not apt for DNA replication. Binds acidic phospholipids. The sequence is that of Chromosomal replication initiator protein DnaA from Lactococcus lactis subsp. cremoris (strain MG1363).